We begin with the raw amino-acid sequence, 85 residues long: RNA-binding protein Hfq (85 aa).

Residues 9–68 form the Sm domain; the sequence is DPFLNALRRERVPVSIYLVNGIKLQGQVESFDQFVILLKNTVSQMVYKHAISTVVPARPF.

It belongs to the Hfq family. As to quaternary structure, homohexamer.

RNA chaperone that binds small regulatory RNA (sRNAs) and mRNAs to facilitate mRNA translational regulation in response to envelope stress, environmental stress and changes in metabolite concentrations. Also binds with high specificity to tRNAs. This is RNA-binding protein Hfq from Shewanella frigidimarina (strain NCIMB 400).